The primary structure comprises 76 residues: Adropin (76 aa).

Positions 1–33 (MGAALSQGALIAIICNGLVGFLLLLLWVILCWA) are cleaved as a signal peptide. The segment at 41 to 76 (IDSLSESSPNSSPGPCPEKAPPPQKPSHEGSYLLQP) is disordered. Residues 52–65 (SPGPCPEKAPPPQK) are compositionally biased toward pro residues.

It is found in the secreted. Its function is as follows. Involved in the regulation of glucose homeostasis and lipid metabolism. This is Adropin (ENHO) from Bos taurus (Bovine).